Consider the following 205-residue polypeptide: LexA repressor (205 aa).

The segment at residues Arg28–Lys48 is a DNA-binding region (H-T-H motif). Active-site for autocatalytic cleavage activity residues include Ser122 and Lys159.

It belongs to the peptidase S24 family. Homodimer.

The catalysed reaction is Hydrolysis of Ala-|-Gly bond in repressor LexA.. In terms of biological role, represses a number of genes involved in the response to DNA damage (SOS response), including recA and lexA. In the presence of single-stranded DNA, RecA interacts with LexA causing an autocatalytic cleavage which disrupts the DNA-binding part of LexA, leading to derepression of the SOS regulon and eventually DNA repair. The protein is LexA repressor of Shewanella woodyi (strain ATCC 51908 / MS32).